The primary structure comprises 290 residues: 2-hydroxy-6-oxo-6-(2'-aminophenyl)hexa-2,4-dienoic acid hydrolase (290 aa).

Residues serine 114, aspartate 233, and histidine 261 contribute to the active site.

This sequence belongs to the DmpD/TodF/XylF esterase family. In terms of assembly, homodimer.

It catalyses the reaction (2E,4E)-6-(2-aminophenyl)-2-hydroxy-6-oxohexa-2,4-dienoate + H2O = (2E)-2-hydroxypenta-2,4-dienoate + anthranilate + H(+). It participates in xenobiotic degradation; carbazole degradation. Involved in the degradation of carbazole, a toxic N-heterocyclic aromatic compound containing dibenzopyrrole system. Catalyzes the hydrolytic cleavage of a carbon-carbon bond of 2-hydroxy-6-oxo-6-(2'-aminophenyl)hexa-2,4-dienoic acid (HOPDA) to yield anthranilate. CarC is specific for 2-hydroxy-6-oxo-6-phenylhexa-2,4-dienoic acid (6-phenyl-HODA), and has little activity toward 2-hydroxy-6-oxohepta-2,4-dienoic acid and 2-hydroxymuconic semialdehyde. The effect of the presence of an amino group or hydroxyl group at the 2'-position of phenyl moiety of 6-phenyl-HODA on the enzyme activity is found to be small. This chain is 2-hydroxy-6-oxo-6-(2'-aminophenyl)hexa-2,4-dienoic acid hydrolase (carC), found in Metapseudomonas resinovorans (Pseudomonas resinovorans).